The primary structure comprises 187 residues: Signal peptidase I U (187 aa).

The Cytoplasmic portion of the chain corresponds to 1–16 (MNAKTITLKKKRKIKT). A helical transmembrane segment spans residues 17-37 (IVVLSIIMIAALIFTIRLVFY). Residues 38 to 187 (KPFLIEGSSM…YPFGEMRQAK (150 aa)) lie on the Extracellular side of the membrane. Residues Ser-46 and Lys-88 contribute to the active site.

Belongs to the peptidase S26 family.

It localises to the cell membrane. It catalyses the reaction Cleavage of hydrophobic, N-terminal signal or leader sequences from secreted and periplasmic proteins.. This Bacillus subtilis (strain 168) protein is Signal peptidase I U (sipU).